Consider the following 131-residue polypeptide: Sulfurtransferase TusD (131 aa).

Cysteine 81 (cysteine persulfide intermediate) is an active-site residue.

It belongs to the DsrE/TusD family. As to quaternary structure, heterohexamer, formed by a dimer of trimers. The hexameric TusBCD complex contains 2 copies each of TusB, TusC and TusD. The TusBCD complex interacts with TusE.

Its subcellular location is the cytoplasm. Its function is as follows. Part of a sulfur-relay system required for 2-thiolation of 5-methylaminomethyl-2-thiouridine (mnm(5)s(2)U) at tRNA wobble positions. Accepts sulfur from TusA and transfers it in turn to TusE. This chain is Sulfurtransferase TusD, found in Yersinia pseudotuberculosis serotype O:1b (strain IP 31758).